We begin with the raw amino-acid sequence, 227 residues long: Urease accessory protein UreF 2 (227 aa).

It belongs to the UreF family. UreD, UreF and UreG form a complex that acts as a GTP-hydrolysis-dependent molecular chaperone, activating the urease apoprotein by helping to assemble the nickel containing metallocenter of UreC. The UreE protein probably delivers the nickel.

The protein localises to the cytoplasm. In terms of biological role, required for maturation of urease via the functional incorporation of the urease nickel metallocenter. The polypeptide is Urease accessory protein UreF 2 (Brucella anthropi (strain ATCC 49188 / DSM 6882 / CCUG 24695 / JCM 21032 / LMG 3331 / NBRC 15819 / NCTC 12168 / Alc 37) (Ochrobactrum anthropi)).